A 313-amino-acid chain; its full sequence is Solute carrier family 35 member E3 (313 aa).

10 consecutive transmembrane segments (helical) span residues 17–37 (GLLL…WIYV), 40–60 (GFPN…GLYV), 77–97 (LLLL…SLQN), 100–120 (IGTY…IQTL), 130–147 (IRLT…NSYY), 153–173 (FLGT…QVWV), 187–206 (LLYY…VPFF), 225–245 (LMVL…YWII), 252–272 (TYNM…YVLF), and 275–295 (PLSI…LAYT).

The protein belongs to the TPT transporter family. SLC35E subfamily.

Its subcellular location is the membrane. Its function is as follows. Putative transporter. In Bos taurus (Bovine), this protein is Solute carrier family 35 member E3 (SLC35E3).